The sequence spans 303 residues: Di/tripeptide transport system permease protein DppC (303 aa).

Transmembrane regions (helical) follow at residues 33–53 (ALGG…APWV), 103–123 (LLIG…LGLL), 131–151 (AGPL…LLLA), 152–172 (VAIV…IAIV), 202–222 (AGTL…PLIV), 225–245 (TLSF…GLGV), and 267–287 (WWVV…INLM). The ABC transmembrane type-1 domain maps to 99–288 (ARLSLLIGLS…LSVLAINLMG (190 aa)).

It belongs to the binding-protein-dependent transport system permease family. OppBC subfamily. In terms of assembly, the complex is composed of two ATP-binding proteins (DppD and DppF), two transmembrane proteins (DppB and DppC) and a solute-binding protein (DppA1-A5). Five orthologous SBPs (DppA1-A5) are present in P.aeruginosa, which increases the substrate specificity of the DppBCDF transporter.

The protein localises to the cell inner membrane. Its function is as follows. Part of the ABC transporter DppABCDF involved in the uptake of various di/tripeptides. Is also involved in the uptake of phaseolotoxin, a toxic tripeptide inhibiting the enzyme ornithine carbamoyltransferase. Responsible for the translocation of the substrate across the membrane. This is Di/tripeptide transport system permease protein DppC from Pseudomonas aeruginosa (strain UCBPP-PA14).